A 149-amino-acid chain; its full sequence is Large ribosomal subunit protein bL9 (149 aa).

Belongs to the bacterial ribosomal protein bL9 family.

Binds to the 23S rRNA. The sequence is that of Large ribosomal subunit protein bL9 from Salmonella dublin (strain CT_02021853).